The following is a 254-amino-acid chain: Alcohol dehydrogenase (254 aa).

10–33 (FVAGLGGIGLDTSREIVKSGPKNL) serves as a coordination point for NAD(+). Ser138 provides a ligand contact to substrate. Residue Tyr151 is the Proton acceptor of the active site.

Belongs to the short-chain dehydrogenases/reductases (SDR) family. In terms of assembly, homodimer.

The catalysed reaction is a primary alcohol + NAD(+) = an aldehyde + NADH + H(+). It catalyses the reaction a secondary alcohol + NAD(+) = a ketone + NADH + H(+). The polypeptide is Alcohol dehydrogenase (Adh) (Drosophila picticornis (Fruit fly)).